We begin with the raw amino-acid sequence, 680 residues long: Outer dense fiber protein 2 (680 aa).

The interval 27–46 (LPKPSATSSQKSHKRGMKGD) is disordered. Phosphoserine occurs at positions 68 and 69. A Phosphothreonine modification is found at T87. S90 bears the Phosphoserine; by TSSK4 mark. 2 positions are modified to phosphoserine: S101 and S104. Phosphothreonine is present on T105. 2 positions are modified to phosphoserine: S110 and S124. Residue K133 forms a Glycyl lysine isopeptide (Lys-Gly) (interchain with G-Cter in SUMO2) linkage. The residue at position 134 (S134) is a Phosphoserine. The stretch at 139 to 212 (QKGERQMAKR…MSKLVEAEMD (74 aa)) forms a coiled coil. Position 226 is a phosphothreonine (T226). Phosphoserine is present on S256. Coiled coils occupy residues 275–418 (KEDS…AEQL) and 456–630 (EIIV…SDLR). Residues 387–410 (KQKGDRDKESLKKAIRAQKERAEK) are disordered. Residue S627 is modified to Phosphoserine. The tract at residues 632-680 (RETGGDQCPEYRVPTGDCQEGGGNPPVPAAARGENTGMWDPGKAVGERH) is disordered.

This sequence belongs to the ODF2 family. In terms of assembly, self-associates. Associates with microtubules and forms a fibrillar structure partially linked to the microtubule network. Interacts via its C-terminus with PLK1. Interacts with ODF1. Interacts with MARK4; the interaction is required for localization of ODF2 to centrioles. Interacts with TSSK4. Interacts with AKNA. Interacts with QRICH2. Interacts with CFAP58. Interacts with BBOF1. Interacts with CCDC38. Interacts with CCDC42. In terms of processing, tyrosine phosphorylated. Phosphorylated on Ser-90 by TSSK4.

The protein resides in the cytoplasm. It localises to the cytoskeleton. It is found in the microtubule organizing center. The protein localises to the centrosome. Its subcellular location is the cell projection. The protein resides in the cilium. It localises to the centriole. It is found in the spindle pole. The protein localises to the flagellum. In terms of biological role, seems to be a major component of sperm tail outer dense fibers (ODF). ODFs are filamentous structures located on the outside of the axoneme in the midpiece and principal piece of the mammalian sperm tail and may help to maintain the passive elastic structures and elastic recoil of the sperm tail. May have a modulating influence on sperm motility. Functions as a general scaffold protein that is specifically localized at the distal/subdistal appendages of mother centrioles. Component of the centrosome matrix required for the localization of PLK1 and NIN to the centrosomes. Required for the formation and/or maintenance of normal CETN1 assembly. The chain is Outer dense fiber protein 2 (ODF2) from Pongo abelii (Sumatran orangutan).